The following is a 1362-amino-acid chain: DNA-directed RNA polymerase subunit beta (1362 aa).

Belongs to the RNA polymerase beta chain family. The RNAP catalytic core consists of 2 alpha, 1 beta, 1 beta' and 1 omega subunit. When a sigma factor is associated with the core the holoenzyme is formed, which can initiate transcription.

It catalyses the reaction RNA(n) + a ribonucleoside 5'-triphosphate = RNA(n+1) + diphosphate. Functionally, DNA-dependent RNA polymerase catalyzes the transcription of DNA into RNA using the four ribonucleoside triphosphates as substrates. The chain is DNA-directed RNA polymerase subunit beta from Acinetobacter baylyi (strain ATCC 33305 / BD413 / ADP1).